A 60-amino-acid chain; its full sequence is MKRQKRDKLQRAHTKGFNAALQGQSKENCPFEELNAREEWLGGWREGREAFTTNGMKAYI.

Belongs to the ribosome modulation factor family.

The protein resides in the cytoplasm. Functionally, during stationary phase, converts 70S ribosomes to an inactive dimeric form (100S ribosomes). The chain is Ribosome modulation factor from Kangiella koreensis (strain DSM 16069 / JCM 12317 / KCTC 12182 / SW-125).